Consider the following 117-residue polypeptide: Appetite-regulating hormone (117 aa).

Residues 1 to 23 (MPSLGTMCSLLLFSVLWVDLAMA) form the signal peptide. Serine 26 carries the O-decanoyl serine; alternate lipid modification. Residue serine 26 is the site of O-hexanoyl serine; alternate attachment. Residue serine 26 is the site of O-octanoyl serine; alternate attachment. The segment at 30-68 (PEHQKLQQRKESKKPPAKLQPRALEGSLGPEDTSQVEEA) is disordered. The span at 31-43 (EHQKLQQRKESKK) shows a compositional bias: basic and acidic residues. Positions 52-75 (ALEGSLGPEDTSQVEEAEDELEIR) are cleaved as a propeptide — removed in mature form. Leucine 98 carries the post-translational modification Leucine amide. The propeptide at 99 to 117 (GKFLQEVLWEDTNEALADE) is removed in mature form.

The protein belongs to the motilin family. Post-translationally, O-octanoylated by GOAT/MBOAT4. O-octanoylation is essential for ghrelin activity. In terms of processing, amidation of Leu-98 is essential for obestatin activity.

Its subcellular location is the secreted. Functionally, ghrelin is the ligand for growth hormone secretagogue receptor type 1 (GHSR). Induces the release of growth hormone from the pituitary. Has an appetite-stimulating effect, induces adiposity and stimulates gastric acid secretion. Involved in growth regulation. Its function is as follows. Obestatin may be the ligand for GPR39. May have an appetite-reducing effect resulting in decreased food intake. May reduce gastric emptying activity and jejunal motility. The sequence is that of Appetite-regulating hormone (GHRL) from Canis lupus familiaris (Dog).